Consider the following 348-residue polypeptide: Methylthioribose-1-phosphate isomerase (348 aa).

Substrate-binding positions include 51–53 (RGA), arginine 94, and glutamine 199. Aspartate 240 serves as the catalytic Proton donor. 250-251 (NK) contributes to the substrate binding site.

This sequence belongs to the eIF-2B alpha/beta/delta subunits family. MtnA subfamily.

The enzyme catalyses 5-(methylsulfanyl)-alpha-D-ribose 1-phosphate = 5-(methylsulfanyl)-D-ribulose 1-phosphate. It participates in amino-acid biosynthesis; L-methionine biosynthesis via salvage pathway; L-methionine from S-methyl-5-thio-alpha-D-ribose 1-phosphate: step 1/6. Its function is as follows. Catalyzes the interconversion of methylthioribose-1-phosphate (MTR-1-P) into methylthioribulose-1-phosphate (MTRu-1-P). In Nitrosococcus oceani (strain ATCC 19707 / BCRC 17464 / JCM 30415 / NCIMB 11848 / C-107), this protein is Methylthioribose-1-phosphate isomerase.